The chain runs to 378 residues: 3-dehydroquinate synthase (378 aa).

NAD(+)-binding positions include 111 to 115, 135 to 136, lysine 148, and lysine 157; these read GVIGD and TS. Zn(2+) contacts are provided by glutamate 190, histidine 252, and histidine 271.

The protein belongs to the sugar phosphate cyclases superfamily. Dehydroquinate synthase family. The cofactor is NAD(+). Co(2+) is required as a cofactor. Requires Zn(2+) as cofactor.

It is found in the cytoplasm. The enzyme catalyses 7-phospho-2-dehydro-3-deoxy-D-arabino-heptonate = 3-dehydroquinate + phosphate. Its pathway is metabolic intermediate biosynthesis; chorismate biosynthesis; chorismate from D-erythrose 4-phosphate and phosphoenolpyruvate: step 2/7. Functionally, catalyzes the conversion of 3-deoxy-D-arabino-heptulosonate 7-phosphate (DAHP) to dehydroquinate (DHQ). The protein is 3-dehydroquinate synthase of Mesorhizobium japonicum (strain LMG 29417 / CECT 9101 / MAFF 303099) (Mesorhizobium loti (strain MAFF 303099)).